A 158-amino-acid chain; its full sequence is Small ribosomal subunit protein uS19 (158 aa).

Belongs to the universal ribosomal protein uS19 family.

Its function is as follows. Protein S19 forms a complex with S13 that binds strongly to the 16S ribosomal RNA. In Pyrobaculum aerophilum (strain ATCC 51768 / DSM 7523 / JCM 9630 / CIP 104966 / NBRC 100827 / IM2), this protein is Small ribosomal subunit protein uS19.